A 555-amino-acid polypeptide reads, in one-letter code: MIGTDPRTILKDLLPETIPPPELDDMTLWQIVINILSEPPKRKKRKDINTIEDAVKLLQECKKIIVLTGAGVSVSCGIPDFRSRDGIYARLAVDFPDLPDPQAMFDIEYFRKDPRPFFKFAKEIYPGQFQPSLCHKFIALSDKEGKLLRNYTQNIDTLEQVAGIQRIIQCHGSFATASCLICKYKVDCEAVRGDIFNQVVPRCPRCPADEPLAIMKPEIVFFGENLPEQFHRAMKYDKDEVDLLIVIGSSLKVRPVALIPSSIPHEVPQILINREPLPHLHFDVELLGDCDVIINELCHRLGGEYAKLCCNPVKLSEITEKPPRTQKELVHLSELPPTPLHISEDSSSPERTVPQDSSVIATLVDQTIKNKVDDLEVSEPKSCVEEKSQEVQTYRNVESINVENPDFKAVGSSTGDKNERTSVAETVRKCWPNRLAKEQISKRLDGNQYLFVPPNRYIFHGAEVYSDSEDDALSSSSCGSNSDSGTCQSPSLEEPLEDESEIEEFYNGLEDDADRPECAGGSGADGGDQEAVNEAIAMKQELTDVNCTPDKSEHY.

The Nuclear localization signal signature appears at proline 39–lysine 46. The 261-residue stretch at lysine 44 to glutamate 304 folds into the Deacetylase sirtuin-type domain. Position 46 is an N6-acetyllysine (lysine 46). Residues isoleucine 64 to leucine 67 are required for interaction with the sumoylated form of CCAR2. NAD(+)-binding positions include glycine 69–tyrosine 88 and glutamine 153–aspartate 156. Histidine 171 (proton acceptor) is an active-site residue. Positions 179 and 182 each coordinate Zn(2+). Lysine 185 carries the post-translational modification N6-acetyllysine. Zn(2+) is bound by residues cysteine 203 and cysteine 206. Cysteine 203 and cysteine 206 each carry S-nitrosocysteine. N6-acetyllysine is present on lysine 238. The Nuclear export signal signature appears at valine 241–isoleucine 247. Residues glycine 248–serine 250, asparagine 273–glutamate 275, and cysteine 290 contribute to the NAD(+) site. Lysine 321 is subject to N6-acetyllysine. Positions leucine 335 to proline 354 are disordered. The residue at position 338 (threonine 338) is a Phosphothreonine. The residue at position 343 (serine 343) is a Phosphoserine. Residues aspartate 345–proline 354 are compositionally biased toward polar residues. Phosphothreonine is present on threonine 352. Lysine 417 is modified (N6-acetyllysine). A phosphoserine mark is found at serine 466 and serine 468. Residues glutamate 469–glutamine 529 form a disordered region. Low complexity predominate over residues leucine 473–glutamate 493. A compositionally biased stretch (acidic residues) spans glutamate 494–aspartate 514. Serine 552 is modified (phosphoserine).

This sequence belongs to the sirtuin family. Class I subfamily. Interacts with XBP1 isoform 2. Found in a complex with PCAF and MYOD1. Interacts with FOXO1; the interaction deacetylates FOXO1, resulting in its nuclear retention and promotion of its transcriptional activity Component of the eNoSC complex, composed of SIRT1, SUV39H1 and RRP8. Interacts with HES1, HEY2 and PML. Interacts with RPS19BP1/AROS. Interacts with CCAR2 (via N-terminus); the interaction disrupts the interaction between SIRT1 and p53/TP53. Interacts with SETD7; the interaction induces the dissociation of SIRT1 from p53/TP53 and increases p53/TP53 activity. Interacts with MYCN, NR1I2, CREBZF, TSC2, TLE1, FOS, JUN, NR0B2, PPARG, NCOR, IRS1, IRS2 and NMNAT1. Interacts with HNF1A; the interaction occurs under nutrient restriction. Interacts with SUZ12; the interaction mediates the association with the PRC4 histone methylation complex which is specific as an association with PCR2 and PCR3 complex variants is not found. Interacts with HIV-1 tat. Interacts with BCL6; leads to a epigenetic repression of specific target genes. Interacts with CLOCK, BMAL1 and PER2. Interacts with PPARA; the interaction seems to be modulated by NAD(+) levels. Interacts with NR1H3 and this interaction is inhibited in the presence of CCAR2. Interacts with CHEK2. Interacts with p53/TP53. Exhibits a preferential interaction with sumoylated CCAR2 over its unmodified form. Interacts with PACS2. Interacts with SIRT7. Interacts with PUS7. Interacts with TULP3. Interacts with MORN3; the interaction enhances the ubiquitination of p53/TP53. Zn(2+) serves as cofactor. In terms of processing, methylated on multiple lysine residues; methylation is enhanced after DNA damage and is dispensable for deacetylase activity toward p53/TP53. Post-translationally, phosphorylated. Phosphorylated by STK4/MST1, resulting in inhibition of SIRT1-mediated p53/TP53 deacetylation. Phosphorylation by MAPK8/JNK1 at Thr-338 leads to increased nuclear localization and enzymatic activity. Phosphorylation at Thr-338 by DYRK1A and DYRK3 activates deacetylase activity and promotes cell survival. Phosphorylated by CaMK2, leading to increased p53/TP53 and NF-kappa-B p65/RELA deacetylation activity. S-nitrosylated by GAPDH, leading to inhibit the NAD-dependent protein deacetylase activity. In terms of processing, acetylated at various Lys residues. Deacetylated via an autocatalytic mechanism. Autodeacetylation at Lys-46 promotes its protein deacetylase activity. Post-translationally, ubiquitinated; leading to degradation. Deubiquitinated by USP22; leading to stabilization.

It localises to the nucleus. Its subcellular location is the PML body. The protein resides in the cytoplasm. The enzyme catalyses N(6)-acetyl-L-lysyl-[protein] + NAD(+) + H2O = 2''-O-acetyl-ADP-D-ribose + nicotinamide + L-lysyl-[protein]. The catalysed reaction is N(6)-propanoyl-L-lysyl-[protein] + NAD(+) + H2O = 3''-O-propanoyl-ADP-D-ribose + nicotinamide + L-lysyl-[protein]. It catalyses the reaction N(6)-(2E)-butenoyl-L-lysyl-[protein] + NAD(+) + H2O = 2''-O-(2E)-but-2-enoyl-ADP-D-ribose + nicotinamide + L-lysyl-[protein]. Inhibited by nicotinamide. Activated by resveratrol (3,5,4'-trihydroxy-trans-stilbene), butein (3,4,2',4'-tetrahydroxychalcone), piceatannol (3,5,3',4'-tetrahydroxy-trans-stilbene), Isoliquiritigenin (4,2',4'-trihydroxychalcone), fisetin (3,7,3',4'-tetrahydroxyflavone) and quercetin (3,5,7,3',4'-pentahydroxyflavone). MAPK8/JNK1 and RPS19BP1/AROS act as positive regulators of deacetylation activity. Negatively regulated by CCAR2. Its function is as follows. NAD-dependent protein deacetylase that links transcriptional regulation directly to intracellular energetics and participates in the coordination of several separated cellular functions such as cell cycle, response to DNA damage, metabolism, apoptosis and autophagy. Can modulate chromatin function through deacetylation of histones and can promote alterations in the methylation of histones and DNA, leading to transcriptional repression. Deacetylates a broad range of transcription factors and coregulators, thereby regulating target gene expression positively and negatively. Serves as a sensor of the cytosolic ratio of NAD(+)/NADH which is altered by glucose deprivation and metabolic changes associated with caloric restriction. Is essential in skeletal muscle cell differentiation and in response to low nutrients mediates the inhibitory effect on skeletal myoblast differentiation which also involves 5'-AMP-activated protein kinase (AMPK) and nicotinamide phosphoribosyltransferase (NAMPT). Component of the eNoSC (energy-dependent nucleolar silencing) complex, a complex that mediates silencing of rDNA in response to intracellular energy status and acts by recruiting histone-modifying enzymes. The eNoSC complex is able to sense the energy status of cell: upon glucose starvation, elevation of NAD(+)/NADP(+) ratio activates SIRT1, leading to histone H3 deacetylation followed by dimethylation of H3 at 'Lys-9' (H3K9me2) by SUV39H1 and the formation of silent chromatin in the rDNA locus. Deacetylates 'Lys-266' of SUV39H1, leading to its activation. Inhibits skeletal muscle differentiation by deacetylating PCAF and MYOD1. Deacetylates H2A and 'Lys-26' of H1-4. Deacetylates 'Lys-16' of histone H4 (in vitro). Involved in NR0B2/SHP corepression function through chromatin remodeling: Recruited to LRH1 target gene promoters by NR0B2/SHP thereby stimulating histone H3 and H4 deacetylation leading to transcriptional repression. Proposed to contribute to genomic integrity via positive regulation of telomere length; however, reports on localization to pericentromeric heterochromatin are conflicting. Proposed to play a role in constitutive heterochromatin (CH) formation and/or maintenance through regulation of the available pool of nuclear SUV39H1. Upon oxidative/metabolic stress decreases SUV39H1 degradation by inhibiting SUV39H1 polyubiquitination by MDM2. This increase in SUV39H1 levels enhances SUV39H1 turnover in CH, which in turn seems to accelerate renewal of the heterochromatin which correlates with greater genomic integrity during stress response. Deacetylates 'Lys-382' of p53/TP53 and impairs its ability to induce transcription-dependent proapoptotic program and modulate cell senescence. Deacetylates TAF1B and thereby represses rDNA transcription by the RNA polymerase I. Deacetylates MYC, promotes the association of MYC with MAX and decreases MYC stability leading to compromised transformational capability. Deacetylates FOXO3 in response to oxidative stress thereby increasing its ability to induce cell cycle arrest and resistance to oxidative stress but inhibiting FOXO3-mediated induction of apoptosis transcriptional activity; also leading to FOXO3 ubiquitination and protesomal degradation. Appears to have a similar effect on MLLT7/FOXO4 in regulation of transcriptional activity and apoptosis. Deacetylates DNMT1; thereby impairs DNMT1 methyltransferase-independent transcription repressor activity, modulates DNMT1 cell cycle regulatory function and DNMT1-mediated gene silencing. Deacetylates RELA/NF-kappa-B p65 thereby inhibiting its transactivating potential and augments apoptosis in response to TNF-alpha. Deacetylates HIF1A, KAT5/TIP60, RB1 and HIC1. Deacetylates FOXO1 resulting in its nuclear retention and enhancement of its transcriptional activity leading to increased gluconeogenesis in liver. Inhibits E2F1 transcriptional activity and apoptotic function, possibly by deacetylation. Involved in HES1- and HEY2-mediated transcriptional repression. In cooperation with MYCN seems to be involved in transcriptional repression of DUSP6/MAPK3 leading to MYCN stabilization by phosphorylation at 'Ser-62'. Deacetylates MEF2D. Required for antagonist-mediated transcription suppression of AR-dependent genes which may be linked to local deacetylation of histone H3. Represses HNF1A-mediated transcription. Required for the repression of ESRRG by CREBZF. Deacetylates NR1H3 AND NR1H2 and deacetylation of NR1H3 at 'Lys-434' positively regulates transcription of NR1H3:RXR target genes, promotes NR1H3 proteasomal degradation and results in cholesterol efflux; a promoter clearing mechanism after reach round of transcription is proposed. Involved in lipid metabolism: deacetylates LPIN1, thereby inhibiting diacylglycerol synthesis. Implicated in regulation of adipogenesis and fat mobilization in white adipocytes by repression of PPARG which probably involves association with NCOR1 and SMRT/NCOR2. Deacetylates p300/EP300 and PRMT1. Deacetylates ACSS2 leading to its activation, and HMGCS1 deacetylation. Involved in liver and muscle metabolism. Through deacetylation and activation of PPARGC1A is required to activate fatty acid oxidation in skeletal muscle under low-glucose conditions and is involved in glucose homeostasis. Involved in regulation of PPARA and fatty acid beta-oxidation in liver. Involved in positive regulation of insulin secretion in pancreatic beta cells in response to glucose; the function seems to imply transcriptional repression of UCP2. Proposed to deacetylate IRS2 thereby facilitating its insulin-induced tyrosine phosphorylation. Deacetylates SREBF1 isoform SREBP-1C thereby decreasing its stability and transactivation in lipogenic gene expression. Involved in DNA damage response by repressing genes which are involved in DNA repair, such as XPC and TP73, deacetylating XRCC6/Ku70, and facilitating recruitment of additional factors to sites of damaged DNA, such as SIRT1-deacetylated NBN can recruit ATM to initiate DNA repair and SIRT1-deacetylated XPA interacts with RPA2. Also involved in DNA repair of DNA double-strand breaks by homologous recombination and specifically single-strand annealing independently of XRCC6/Ku70 and NBN. Promotes DNA double-strand breaks by mediating deacetylation of SIRT6. Transcriptional suppression of XPC probably involves an E2F4:RBL2 suppressor complex and protein kinase B (AKT) signaling. Transcriptional suppression of TP73 probably involves E2F4 and PCAF. Deacetylates WRN thereby regulating its helicase and exonuclease activities and regulates WRN nuclear translocation in response to DNA damage. Deacetylates APEX1 at 'Lys-6' and 'Lys-7' and stimulates cellular AP endonuclease activity by promoting the association of APEX1 to XRCC1. Catalyzes deacetylation of ERCC4/XPF, thereby impairing interaction with ERCC1 and nucleotide excision repair (NER). Increases p53/TP53-mediated transcription-independent apoptosis by blocking nuclear translocation of cytoplasmic p53/TP53 and probably redirecting it to mitochondria. Deacetylates XRCC6/Ku70 at 'Lys-539' and 'Lys-542' causing it to sequester BAX away from mitochondria thereby inhibiting stress-induced apoptosis. Is involved in autophagy, presumably by deacetylating ATG5, ATG7 and MAP1LC3B/ATG8. Deacetylates AKT1 which leads to enhanced binding of AKT1 and PDK1 to PIP3 and promotes their activation. Proposed to play role in regulation of STK11/LBK1-dependent AMPK signaling pathways implicated in cellular senescence which seems to involve the regulation of the acetylation status of STK11/LBK1. Can deacetylate STK11/LBK1 and thereby increase its activity, cytoplasmic localization and association with STRAD; however, the relevance of such activity in normal cells is unclear. In endothelial cells is shown to inhibit STK11/LBK1 activity and to promote its degradation. Deacetylates SMAD7 at 'Lys-64' and 'Lys-70' thereby promoting its degradation. Deacetylates CIITA and augments its MHC class II transactivation and contributes to its stability. Deacetylates MECOM/EVI1. Deacetylates PML at 'Lys-487' and this deacetylation promotes PML control of PER2 nuclear localization. During the neurogenic transition, represses selective NOTCH1-target genes through histone deacetylation in a BCL6-dependent manner and leading to neuronal differentiation. Regulates the circadian expression of several core clock genes, including BMAL1, RORC, PER2 and CRY1 and plays a critical role in maintaining a controlled rhythmicity in histone acetylation, thereby contributing to circadian chromatin remodeling. Deacetylates BMAL1 and histones at the circadian gene promoters in order to facilitate repression by inhibitory components of the circadian oscillator. Deacetylates PER2, facilitating its ubiquitination and degradation by the proteasome. Protects cardiomyocytes against palmitate-induced apoptosis. Deacetylates XBP1 isoform 2; deacetylation decreases protein stability of XBP1 isoform 2 and inhibits its transcriptional activity. Deacetylates PCK1 and directs its activity toward phosphoenolpyruvate production promoting gluconeogenesis. Involved in the CCAR2-mediated regulation of PCK1 and NR1D1. Deacetylates CTNB1 at 'Lys-49'. In POMC (pro-opiomelanocortin) neurons, required for leptin-induced activation of PI3K signaling. In addition to protein deacetylase activity, also acts as a protein-lysine deacylase by mediating protein depropionylation and decrotonylation. Mediates depropionylation of Osterix (SP7). Catalyzes decrotonylation of histones; it however does not represent a major histone decrotonylase. Deacetylates SOX9; promoting SOX9 nuclear localization and transactivation activity. Involved in the regulation of centrosome duplication. Deacetylates CENATAC in G1 phase, allowing for SASS6 accumulation on the centrosome and subsequent procentriole assembly. Deacetylates NDC80/HEC1. The chain is NAD-dependent protein deacetylase sirtuin-1 from Rattus norvegicus (Rat).